The following is a 306-amino-acid chain: Curved DNA-binding protein (306 aa).

The J domain maps to 5-69 (DYYAIMGVKP…QRRAEYDQMW (65 aa)).

Its subcellular location is the cytoplasm. It localises to the nucleoid. Its function is as follows. DNA-binding protein that preferentially recognizes a curved DNA sequence. It is probably a functional analog of DnaJ; displays overlapping activities with DnaJ, but functions under different conditions, probably acting as a molecular chaperone in an adaptive response to environmental stresses other than heat shock. Lacks autonomous chaperone activity; binds native substrates and targets them for recognition by DnaK. Its activity is inhibited by the binding of CbpM. The chain is Curved DNA-binding protein from Escherichia coli (strain K12 / MC4100 / BW2952).